The following is a 354-amino-acid chain: Protein sex-lethal (354 aa).

The disordered stretch occupies residues Met1 to Tyr21. RRM domains are found at residues Thr125–Pro203 and Thr211–Glu291.

Part of a complex containing fl(2)d, Sxl and vir. Part of a complex composed of at least mei-P26, bam, bgcn and Sxl; this complex is involved in translational repression of nanos mRNA. interacts with mei-p26. Interacts with nito. Interacts with Unr; cooperates with Unr to prevent translation of msl-2 transcripts. Interacts with how; promoting nuclear retention of msl-2 transcripts. In terms of tissue distribution, expressed in somatic tissues, but not in the pole cells, which are the precursors of the germline. Expressed in the anterior of the germarium.

The protein localises to the nucleus. It is found in the cytoplasm. Its function is as follows. Sex determination switch protein, which controls sexual development and dosage compensation in females. Sxl protein is only active in females: it is inactive in males throughout development. Acts as a mRNA-binding protein, which specifically binds to a subset of pre-mRNAs and mRNAs and regulates their processing and/or translation. Binds nanos mRNA and is involved in bam-bgcn mediated repression of nanos mRNA translation. Promotes sexual development by controlling the female-specific alternative splicing of the transformer (tra) pre-mRNA: binds tightly to a characteristic uridine-rich polypyrimidine tract at the non-sex specific 3' splice site in one of the tra introns, preventing the general splicing factor U2AF from binding to this site and forcing it to bind to the female-specific 3' splice site. Acts as an inhibitor of dosage compensation in females by preventing production of msl-2 protein, an essential component of the MSL complex, the complex that mediates X-chromosome dosage compensation. Specifically binds to uridine stretches in both the 5'- and 3'-UTR of msl-2 transcripts. Sxl first acts at the splicing level by promoting retention of an intron in the 5' UTR of msl-2 pre-mRNA. The retained intron contains Sxl-binding sites that are required for subsequent steps of repression: after msl-2 mRNA export into the cytoplasm, Sxl coordinates its translational repression by targeting early steps of translation initiation. Together with how, Sxl also prevents production of msl-2 protein by preventing nuclear export of msl-2 transcripts. Functionally, embryo-specific product, which is expressed early only in female embryos and specifies female-adult specific splicing. This chain is Protein sex-lethal, found in Drosophila melanogaster (Fruit fly).